The chain runs to 414 residues: Probable cytochrome P450 127A1 (414 aa).

Cys364 provides a ligand contact to heme.

This sequence belongs to the cytochrome P450 family. It depends on heme as a cofactor.

In terms of biological role, cytochromes P450 are a group of heme-thiolate monooxygenases. They oxidize a variety of structurally unrelated compounds, including steroids, fatty acids, and xenobiotics. This Sinorhizobium fredii (strain NBRC 101917 / NGR234) protein is Probable cytochrome P450 127A1 (cyp127A1).